The chain runs to 370 residues: Death-associated protein kinase 2 (370 aa).

The Protein kinase domain occupies 23–285 (YDIGEELGSG…IQEALRHPWI (263 aa)). ATP is bound by residues 29 to 37 (LGSGQFAIV) and Lys52. The Proton acceptor role is filled by Asp149. The calmodulin-binding stretch occupies residues 277-344 (QEALRHPWIT…KVHLRPDEDL (68 aa)). Residues 292 to 301 (QAMVRRESVV) are autoinhibitory domain. A Phosphoserine modification is found at Ser299. The residue at position 318 (Ser318) is a Phosphoserine; by autocatalysis. Residues 348–370 (ESDTEEDIARRKALHPRRRSSTS) are disordered. Ser349 bears the Phosphoserine mark. Basic residues predominate over residues 358 to 370 (RKALHPRRRSSTS). Thr369 bears the Phosphothreonine; by PKB/AKT1 mark.

This sequence belongs to the protein kinase superfamily. CAMK Ser/Thr protein kinase family. DAP kinase subfamily. In terms of assembly, homodimer in its autoinhibited state. Active as monomer. Isoform 2 but not isoform 1 can interact with ATF4. Interacts with 14-3-3 proteins YWHAB, YWHAE, YWHAG, YWHAH, YWHAQ, YWHAZ and SFN; the interaction requires DAPK2 phosphorylation at Thr-369 and suppresses DAPK2 kinase activity and DAPK2-induced apoptosis. The cofactor is Mg(2+). Post-translationally, autophosphorylation at Ser-318 inhibits its catalytic activity. Dephosphorylated at Ser-318 in response to activated Fas and TNF-alpha receptors. Expressed in neutrophils and eosinophils. Isoform 2 is expressed in embryonic stem cells (at protein level). Isoform 1 is ubiquitously expressed in all tissue types examined with high levels in heart, lung and skeletal muscle.

Its subcellular location is the cytoplasm. It localises to the cytoplasmic vesicle. It is found in the autophagosome lumen. The enzyme catalyses L-seryl-[protein] + ATP = O-phospho-L-seryl-[protein] + ADP + H(+). The catalysed reaction is L-threonyl-[protein] + ATP = O-phospho-L-threonyl-[protein] + ADP + H(+). Activated by Ca(2+)/calmodulin. Regulated by a double locking mechanism, involving autophosphorylation at Ser-318, calmodulin binding, and dimerization. In the inactive state, Ser-318 is phosphorylated, and the kinase is dimeric. Activation involves: dephosphorylation at Ser-318, release-of-autoinhibition mechanism where calmodulin binding induces a conformational change that relieves the steric block of the active site by the autoinhibitory domain, and generation of the monomeric active form of the kinase. Functionally, calcium/calmodulin-dependent serine/threonine kinase involved in multiple cellular signaling pathways that trigger cell survival, apoptosis, and autophagy. Regulates both type I apoptotic and type II autophagic cell death signals, depending on the cellular setting. The former is caspase-dependent, while the latter is caspase-independent and is characterized by the accumulation of autophagic vesicles. Acts as a mediator of anoikis and a suppressor of beta-catenin-dependent anchorage-independent growth of malignant epithelial cells. May play a role in granulocytic maturation. Regulates granulocytic motility by controlling cell spreading and polarization. Isoform 2 is not regulated by calmodulin. It can phosphorylate MYL9. It can induce membrane blebbing and autophagic cell death. The chain is Death-associated protein kinase 2 (DAPK2) from Homo sapiens (Human).